The chain runs to 244 residues: tRNA (guanine-N(1)-)-methyltransferase (244 aa).

S-adenosyl-L-methionine-binding positions include Gly-111 and 130–135 (IGDYVL).

It belongs to the RNA methyltransferase TrmD family. As to quaternary structure, homodimer.

Its subcellular location is the cytoplasm. The enzyme catalyses guanosine(37) in tRNA + S-adenosyl-L-methionine = N(1)-methylguanosine(37) in tRNA + S-adenosyl-L-homocysteine + H(+). Its function is as follows. Specifically methylates guanosine-37 in various tRNAs. The protein is tRNA (guanine-N(1)-)-methyltransferase of Phytoplasma australiense.